The sequence spans 112 residues: MSMKYLAAYALASLNKPTPGAADVEAICKACGIEVESDALSFVMESIAGRSVATLVAEGAAKMSAVAVSAAPAAGDAAAPAAAAGGAAAPAAADAKKEEEEEDDDMGFGLFD.

The interval 89–112 is disordered; the sequence is APAAADAKKEEEEEDDDMGFGLFD.

This sequence belongs to the eukaryotic ribosomal protein P1/P2 family. In terms of assembly, P1 and P2 exist as dimers at the large ribosomal subunit. In terms of processing, phosphorylated.

Its function is as follows. Plays an important role in the elongation step of protein synthesis. In Trypanosoma cruzi, this protein is Large ribosomal subunit protein P2-B.